The chain runs to 509 residues: Glycogen synthase (509 aa).

K47 lines the ADP-alpha-D-glucose pocket.

This sequence belongs to the glycosyltransferase 1 family. Bacterial/plant glycogen synthase subfamily.

The catalysed reaction is [(1-&gt;4)-alpha-D-glucosyl](n) + ADP-alpha-D-glucose = [(1-&gt;4)-alpha-D-glucosyl](n+1) + ADP + H(+). It participates in glycan biosynthesis; glycogen biosynthesis. Functionally, synthesizes alpha-1,4-glucan chains using ADP-glucose. The sequence is that of Glycogen synthase from Xanthomonas oryzae pv. oryzae (strain MAFF 311018).